We begin with the raw amino-acid sequence, 98 residues long: Nuclear protein 2 (98 aa).

Low complexity predominate over residues 1 to 11 (MEPAAPTVQPR). Disordered regions lie at residues 1–24 (MEPA…PPVG) and 78–98 (LNSQ…TRLT). Positions 81 to 98 (QRKRRQRQLQPRPRTRLT) are enriched in basic residues.

Belongs to the NUPR family.

Its subcellular location is the nucleus. Acts as a transcriptional repressor by inhibiting gene expression at the NUPR1 promoter in a p53/TP53-dependent manner in cancer cells. Involved in the G1 cell cycle arrest, and in a decrease in cell viability and cell proliferation. Plays a role as a negative regulator of the protumoral factor NUPR1. The sequence is that of Nuclear protein 2 from Bos taurus (Bovine).